A 241-amino-acid polypeptide reads, in one-letter code: GDSL esterase/lipase At5g45920 (241 aa).

Serine 12 serves as the catalytic Nucleophile. Active-site residues include aspartate 189 and histidine 192.

The protein belongs to the 'GDSL' lipolytic enzyme family.

The protein is GDSL esterase/lipase At5g45920 of Arabidopsis thaliana (Mouse-ear cress).